We begin with the raw amino-acid sequence, 200 residues long: A-type ATP synthase subunit E (200 aa).

Belongs to the V-ATPase E subunit family. As to quaternary structure, has multiple subunits with at least A(3), B(3), C, D, E, F, H, I and proteolipid K(x).

The protein resides in the cell membrane. In terms of biological role, component of the A-type ATP synthase that produces ATP from ADP in the presence of a proton gradient across the membrane. The polypeptide is A-type ATP synthase subunit E (Aeropyrum pernix (strain ATCC 700893 / DSM 11879 / JCM 9820 / NBRC 100138 / K1)).